A 249-amino-acid polypeptide reads, in one-letter code: Expansin-A18 (249 aa).

Positions 1–21 (MGNIVLQLLAILALCIAPARS) are cleaved as a signal peptide. Positions 41 to 154 (GGACGYGNLY…QQVKCWRSGG (114 aa)) constitute an Expansin-like EG45 domain. A glycan (N-linked (GlcNAc...) asparagine) is linked at Asn-116. The region spanning 164–243 (YFELVLVTNM…GWSFGQTFST (80 aa)) is the Expansin-like CBD domain.

It belongs to the expansin family. Expansin A subfamily. In terms of tissue distribution, expressed in roots.

It is found in the secreted. It localises to the cell wall. The protein resides in the membrane. In terms of biological role, may cause loosening and extension of plant cell walls by disrupting non-covalent bonding between cellulose microfibrils and matrix glucans. No enzymatic activity has been found. May be required for rapid internodal elongation in deepwater rice during submergence. This is Expansin-A18 (EXPA18) from Oryza sativa subsp. japonica (Rice).